The following is a 223-amino-acid chain: Adenylate kinase (223 aa).

An ATP-binding site is contributed by 10–15; the sequence is GAGKGT. Residues 30–59 form an NMP region; that stretch reads STGDILRQAVKEGTEVGKIAGELMKAGKLI. Residues Thr-31, Arg-36, 57–59, 85–88, and Gln-92 each bind AMP; these read KLI and GFPR. The tract at residues 126 to 163 is LID; the sequence is GRYVCAQCGAGYHDEFKRPHKEGVCDICGSTEFKRRPD. Position 127 (Arg-127) interacts with ATP. 4 residues coordinate Zn(2+): Cys-130, Cys-133, Cys-150, and Cys-153. AMP-binding residues include Arg-160 and Arg-172. Leu-200 serves as a coordination point for ATP.

It belongs to the adenylate kinase family. As to quaternary structure, monomer.

The protein resides in the cytoplasm. It catalyses the reaction AMP + ATP = 2 ADP. Its pathway is purine metabolism; AMP biosynthesis via salvage pathway; AMP from ADP: step 1/1. In terms of biological role, catalyzes the reversible transfer of the terminal phosphate group between ATP and AMP. Plays an important role in cellular energy homeostasis and in adenine nucleotide metabolism. The protein is Adenylate kinase of Zymomonas mobilis subsp. mobilis (strain ATCC 31821 / ZM4 / CP4).